We begin with the raw amino-acid sequence, 394 residues long: MTPQVLTILGSTGSIGESTLDVVSRHPEKFRVFALAGHKQVEKLAAQCQTFHPEYAVVADAEHAARLEALLKRDGTATQVLHGAQALVDVASADEVSGVMCAIVGAVGLPSALAAAQKGKTIYLANKETLVVSGALFMETARANGAAVLPVDSEHNAVFQVLPRDYTGRLNEHGIASIILTASGGPFLTADLNTFDSITPDQAVKHPNWRMGRKISVDSATMMNKGLELIEAHWLFNCPPDKLEVVIHPQSVIHSMVRYRDGSVLAQLGNPDMRTPIAYCLGLPERIDSGVGDLDFDALSALTFQKPDFDRFPCLKLAYEAMNAGGAAPCVLNAANEAAVAAFLDGQIKFTDIAKTVAHCLSQDFSDGIGDIGGLLAQDARTRAQARAFIGTLR.

Positions 12, 13, 14, 15, 39, 40, and 126 each coordinate NADPH. 1-deoxy-D-xylulose 5-phosphate is bound at residue K127. E128 serves as a coordination point for NADPH. Position 152 (D152) interacts with Mn(2+). S153, E154, S183, and H206 together coordinate 1-deoxy-D-xylulose 5-phosphate. E154 is a Mn(2+) binding site. G212 is an NADPH binding site. 1-deoxy-D-xylulose 5-phosphate-binding residues include S219, N224, K225, and E228. E228 is a Mn(2+) binding site.

The protein belongs to the DXR family. The cofactor is Mg(2+). Requires Mn(2+) as cofactor.

The enzyme catalyses 2-C-methyl-D-erythritol 4-phosphate + NADP(+) = 1-deoxy-D-xylulose 5-phosphate + NADPH + H(+). It participates in isoprenoid biosynthesis; isopentenyl diphosphate biosynthesis via DXP pathway; isopentenyl diphosphate from 1-deoxy-D-xylulose 5-phosphate: step 1/6. Functionally, catalyzes the NADPH-dependent rearrangement and reduction of 1-deoxy-D-xylulose-5-phosphate (DXP) to 2-C-methyl-D-erythritol 4-phosphate (MEP). This is 1-deoxy-D-xylulose 5-phosphate reductoisomerase from Neisseria meningitidis serogroup A / serotype 4A (strain DSM 15465 / Z2491).